The chain runs to 159 residues: Ribosomal RNA large subunit methyltransferase H (159 aa).

S-adenosyl-L-methionine contacts are provided by residues leucine 76, glycine 108, and 127 to 132 (FGKMTL).

It belongs to the RNA methyltransferase RlmH family. Homodimer.

The protein localises to the cytoplasm. The enzyme catalyses pseudouridine(1915) in 23S rRNA + S-adenosyl-L-methionine = N(3)-methylpseudouridine(1915) in 23S rRNA + S-adenosyl-L-homocysteine + H(+). Its function is as follows. Specifically methylates the pseudouridine at position 1915 (m3Psi1915) in 23S rRNA. The sequence is that of Ribosomal RNA large subunit methyltransferase H from Lysinibacillus sphaericus (strain C3-41).